A 613-amino-acid chain; its full sequence is Histone acetyltransferase KAT7 (613 aa).

The segment at Met-1 to Arg-175 is disordered. 5 positions are modified to phosphoserine: Ser-12, Ser-52, Ser-55, Ser-59, and Ser-66. Positions Val-44 to Ser-59 are enriched in low complexity. Phosphothreonine occurs at positions 87 and 90. Residues Gln-98 to Glu-107 show a composition bias toward polar residues. Phosphoserine is present on Ser-104. Thr-106 is modified (phosphothreonine). Over residues Phe-112–Pro-127 the composition is skewed to basic and acidic residues. Residues Ser-113 and Ser-126 each carry the phosphoserine modification. At Thr-130 the chain carries Phosphothreonine. A compositionally biased stretch (low complexity) spans Pro-136 to Pro-147. Over residues Ser-150 to His-170 the composition is skewed to basic and acidic residues. Ser-160, Ser-164, Ser-166, and Ser-180 each carry phosphoserine. The segment at His-178 to Glu-221 adopts a CCHHC-type zinc-finger fold. Lys-201 and Lys-279 each carry N6-acetyllysine. Lys-325 participates in a covalent cross-link: Glycyl lysine isopeptide (Lys-Gly) (interchain with G-Cter in SUMO2). The 276-residue stretch at Glu-334–Pro-609 folds into the MYST-type HAT domain. Lys-340 is covalently cross-linked (Glycyl lysine isopeptide (Lys-Gly) (interchain with G-Cter in ubiquitin)). The C2HC MYST-type zinc-finger motif lies at Leu-367–Trp-392. 4 residues coordinate Zn(2+): Cys-370, Cys-373, His-386, and Cys-390. The residue at position 434 (Lys-434) is an N6-acetyllysine; by autocatalysis. Acetyl-CoA-binding positions include Ile-477–Thr-479 and Arg-485–Lys-490. Ser-508 carries the post-translational modification Phosphoserine. Residue Glu-510 is the Proton donor/acceptor of the active site. Residues Ser-514 and Ser-523 each coordinate acetyl-CoA.

This sequence belongs to the MYST (SAS/MOZ) family. Component of the HBO1 complex composed of KAT7/HBO1, MEAF6, ING4 or ING5, and one scaffold subunit: complexes containing BRPF scaffold (BRPF1, BRD1/BRPF2 or BRPF3) direct KAT7/HBO1 specificity towards H3K14ac, while complexes containing JADE scaffold (JADE1, JADE2 and JADE3) mediate acetylation of histone H4. Interacts with MCM2 and ORC1. Interacts with the androgen receptor (AR) in the presence of dihydrotestosterone. Interacts with CDT1. Interacts with MAP2K1 and CUL1. Interacts with p53/TP53; leading to inhibit histone acetyltransferase activity. In terms of processing, phosphorylated at Ser-52 and Ser-55 by ATR in response to DNA damage, promoting its ubiquitination by the CRL4(DDB2) complex and subsequent degradation. Phosphorylation at Ser-52 and Ser-55 by ATR in response to ultraviolet-induced DNA, promotes localization to DNA damage sites. Phosphorylation at Ser-59 by PLK1 during mitosis seems important for prereplicative complex formation and DNA replication licensing, and requires prior phosphorylation at Thr-87 and Thr-90 by CDK1. Phosphorylated by MAP2K1, which accelerates its degradation. Post-translationally, ubiquitinated at Lys-340, leading to proteasomal degradation. Ubiquitinated by the CRL4(DDB2) complex following phosphorylation by ATR, leading to its subsequent degradation. Autoacetylation at Lys-434 is required for proper function. In terms of tissue distribution, widely expressed in adult tissues.

The protein localises to the nucleus. It is found in the chromosome. Its subcellular location is the centromere. The protein resides in the cytoplasm. It localises to the cytosol. It carries out the reaction L-lysyl-[protein] + acetyl-CoA = N(6)-acetyl-L-lysyl-[protein] + CoA + H(+). With respect to regulation, histone acetyltransferase activity is inhibited by GMNN in the context of a complex with CDT1, inhibiting histone H4 acetylation and DNA replication licensing. Its function is as follows. Catalytic subunit of histone acetyltransferase HBO1 complexes, which specifically mediate acetylation of histone H3 at 'Lys-14' (H3K14ac), thereby regulating various processes, such as gene transcription, protein ubiquitination, immune regulation, stem cell pluripotent and self-renewal maintenance and embryonic development. Some complexes also catalyze acetylation of histone H4 at 'Lys-5', 'Lys-8' and 'Lys-12' (H4K5ac, H4K8ac and H4K12ac, respectively), regulating DNA replication initiation, regulating DNA replication initiation. Specificity of the HBO1 complexes is determined by the scaffold subunit: complexes containing BRPF scaffold (BRPF1, BRD1/BRPF2 or BRPF3) direct KAT7/HBO1 specificity towards H3K14ac, while complexes containing JADE (JADE1, JADE2 and JADE3) scaffold direct KAT7/HBO1 specificity towards histone H4. H3K14ac promotes transcriptional elongation by facilitating the processivity of RNA polymerase II. Acts as a key regulator of hematopoiesis by forming a complex with BRD1/BRPF2, directing KAT7/HBO1 specificity towards H3K14ac and promoting erythroid differentiation. H3K14ac is also required for T-cell development. KAT7/HBO1-mediated acetylation facilitates two consecutive steps, licensing and activation, in DNA replication initiation: H3K14ac facilitates the activation of replication origins, and histone H4 acetylation (H4K5ac, H4K8ac and H4K12ac) facilitates chromatin loading of MCM complexes, promoting DNA replication licensing. Acts as a positive regulator of centromeric CENPA assembly: recruited to centromeres and mediates histone acetylation, thereby preventing centromere inactivation mediated by SUV39H1, possibly by increasing histone turnover/exchange. Involved in nucleotide excision repair: phosphorylation by ATR in response to ultraviolet irradiation promotes its localization to DNA damage sites, where it mediates histone acetylation to facilitate recruitment of XPC at the damaged DNA sites. Acts as an inhibitor of NF-kappa-B independently of its histone acetyltransferase activity. Functionally, plays a central role in the maintenance of leukemia stem cells in acute myeloid leukemia (AML). Acts by mediating acetylation of histone H3 at 'Lys-14' (H3K14ac), thereby facilitating the processivity of RNA polymerase II to maintain the high expression of key genes, such as HOXA9 and HOXA10 that help to sustain the functional properties of leukemia stem cells. The sequence is that of Histone acetyltransferase KAT7 from Mus musculus (Mouse).